The sequence spans 631 residues: 1-deoxy-D-xylulose-5-phosphate synthase (631 aa).

Residues H87 and 128-130 (GHS) contribute to the thiamine diphosphate site. D159 provides a ligand contact to Mg(2+). Thiamine diphosphate-binding positions include 160-161 (GA), N188, F295, and E377. A Mg(2+)-binding site is contributed by N188.

The protein belongs to the transketolase family. DXPS subfamily. In terms of assembly, homodimer. Mg(2+) serves as cofactor. The cofactor is thiamine diphosphate.

It catalyses the reaction D-glyceraldehyde 3-phosphate + pyruvate + H(+) = 1-deoxy-D-xylulose 5-phosphate + CO2. It participates in metabolic intermediate biosynthesis; 1-deoxy-D-xylulose 5-phosphate biosynthesis; 1-deoxy-D-xylulose 5-phosphate from D-glyceraldehyde 3-phosphate and pyruvate: step 1/1. In terms of biological role, catalyzes the acyloin condensation reaction between C atoms 2 and 3 of pyruvate and glyceraldehyde 3-phosphate to yield 1-deoxy-D-xylulose-5-phosphate (DXP). This is 1-deoxy-D-xylulose-5-phosphate synthase from Pseudomonas putida (strain GB-1).